A 224-amino-acid polypeptide reads, in one-letter code: Phosphoribosyltransferase domain-containing protein 1 (224 aa).

2 residues coordinate Mg(2+): Glu-140 and Asp-141. Residues 140 to 148 (EDIINTGRT), Lys-172, 193 to 194 (FV), and Asp-200 contribute to the GMP site. Mg(2+) is bound at residue Asp-200.

It belongs to the purine/pyrimidine phosphoribosyltransferase family.

The protein is Phosphoribosyltransferase domain-containing protein 1 (prtfdc1) of Xenopus tropicalis (Western clawed frog).